Here is a 236-residue protein sequence, read N- to C-terminus: MGQKINPIGLRLGINRTWDSRWYANTGEYGKLLHEDVKIREFLTEELKQAAISKIVIERPHKKCRVTIHSARPGIIIGKKGADIEKLRKKLSEMTNADTSLNIVEVRKPEIDATLIAQSIAQQLERRVAFRRAMKRAVQSAMRLGAEGIRINCSGRLGGAEIARMEWYREGRVPLHTLRADIDYGTAEAKTAYGICGVKVWVFKGEILEHDPMASERRAVEGDNQGSSSNRRRENA.

Residues I39–R107 form the KH type-2 domain. Positions A214 to A236 are disordered.

This sequence belongs to the universal ribosomal protein uS3 family. Part of the 30S ribosomal subunit. Forms a tight complex with proteins S10 and S14.

In terms of biological role, binds the lower part of the 30S subunit head. Binds mRNA in the 70S ribosome, positioning it for translation. The chain is Small ribosomal subunit protein uS3 from Brucella anthropi (strain ATCC 49188 / DSM 6882 / CCUG 24695 / JCM 21032 / LMG 3331 / NBRC 15819 / NCTC 12168 / Alc 37) (Ochrobactrum anthropi).